The primary structure comprises 209 residues: Uracil phosphoribosyltransferase (209 aa).

Residues arginine 79, arginine 104, and 131-139 (DPMLATGGS) contribute to the 5-phospho-alpha-D-ribose 1-diphosphate site. Residues isoleucine 194 and 199–201 (GDA) each bind uracil. Aspartate 200 is a 5-phospho-alpha-D-ribose 1-diphosphate binding site.

It belongs to the UPRTase family. Mg(2+) is required as a cofactor.

The enzyme catalyses UMP + diphosphate = 5-phospho-alpha-D-ribose 1-diphosphate + uracil. It participates in pyrimidine metabolism; UMP biosynthesis via salvage pathway; UMP from uracil: step 1/1. With respect to regulation, allosterically activated by GTP. Functionally, catalyzes the conversion of uracil and 5-phospho-alpha-D-ribose 1-diphosphate (PRPP) to UMP and diphosphate. This is Uracil phosphoribosyltransferase from Clostridium kluyveri (strain NBRC 12016).